A 213-amino-acid polypeptide reads, in one-letter code: Peroxynitrite isomerase (213 aa).

Residues 1 to 10 (MGADATGDTA) show a composition bias toward low complexity. Residues 1–26 (MGADATGDTAARGDRAAHGDTASGGA) form a disordered region. The short motif at 51–57 (GTWRGEG) is the GXWXGXG element. His-203 provides a ligand contact to heme b.

It belongs to the nitrobindin family. Homodimer. Heme b is required as a cofactor.

It catalyses the reaction peroxynitrite = nitrate. It participates in nitrogen metabolism. Its function is as follows. Heme-binding protein able to scavenge peroxynitrite and to protect free L-tyrosine against peroxynitrite-mediated nitration, by acting as a peroxynitrite isomerase that converts peroxynitrite to nitrate. Therefore, this protein likely plays a role in peroxynitrite sensing and in the detoxification of reactive nitrogen and oxygen species (RNS and ROS, respectively). Is able to bind nitric oxide (NO) in vitro, but may act as a sensor of peroxynitrite levels in vivo. The chain is Peroxynitrite isomerase from Parafrankia sp. (strain EAN1pec).